Reading from the N-terminus, the 261-residue chain is Probable membrane transporter protein XF_0764 (261 aa).

A run of 8 helical transmembrane segments spans residues 6-26 (LIVT…LGGG), 29-49 (ILAT…IAIG), 78-98 (VIFA…GMLI), 99-119 (DGQR…LLML), 150-170 (AASG…LIFA), 175-195 (TINA…ITTL), 205-225 (WTIA…GTLL), and 239-259 (VFGL…WASL).

This sequence belongs to the 4-toluene sulfonate uptake permease (TSUP) (TC 2.A.102) family.

The protein localises to the cell membrane. The chain is Probable membrane transporter protein XF_0764 from Xylella fastidiosa (strain 9a5c).